The sequence spans 203 residues: Arcadin-2 (203 aa).

As to quaternary structure, interacts with crenactin.

The protein localises to the cytoplasm. Its subcellular location is the cytoskeleton. Its function is as follows. Part of an actin-like archaeal cytoskeleton. Prevents polymerization of crenactin filaments by binding its C-terminus into crenactin's hydrophobic groove. May act by competing with the D-loop of the following crenactin subunit for the hydrophobic groove. This Pyrobaculum calidifontis (strain DSM 21063 / JCM 11548 / VA1) protein is Arcadin-2.